The sequence spans 479 residues: Aspartyl/glutamyl-tRNA(Asn/Gln) amidotransferase subunit B (479 aa).

This sequence belongs to the GatB/GatE family. GatB subfamily. Heterotrimer of A, B and C subunits.

It catalyses the reaction L-glutamyl-tRNA(Gln) + L-glutamine + ATP + H2O = L-glutaminyl-tRNA(Gln) + L-glutamate + ADP + phosphate + H(+). It carries out the reaction L-aspartyl-tRNA(Asn) + L-glutamine + ATP + H2O = L-asparaginyl-tRNA(Asn) + L-glutamate + ADP + phosphate + 2 H(+). In terms of biological role, allows the formation of correctly charged Asn-tRNA(Asn) or Gln-tRNA(Gln) through the transamidation of misacylated Asp-tRNA(Asn) or Glu-tRNA(Gln) in organisms which lack either or both of asparaginyl-tRNA or glutaminyl-tRNA synthetases. The reaction takes place in the presence of glutamine and ATP through an activated phospho-Asp-tRNA(Asn) or phospho-Glu-tRNA(Gln). The chain is Aspartyl/glutamyl-tRNA(Asn/Gln) amidotransferase subunit B from Myxococcus xanthus (strain DK1622).